We begin with the raw amino-acid sequence, 77 residues long: Large ribosomal subunit protein eL20 (77 aa).

Belongs to the eukaryotic ribosomal protein eL20 family. As to quaternary structure, part of the 50S ribosomal subunit. Binds 23S rRNA.

The polypeptide is Large ribosomal subunit protein eL20 (Pyrococcus horikoshii (strain ATCC 700860 / DSM 12428 / JCM 9974 / NBRC 100139 / OT-3)).